Here is a 100-residue protein sequence, read N- to C-terminus: NADH-quinone oxidoreductase subunit K (100 aa).

3 helical membrane passes run 4–24 (LQHG…GLVI), 28–48 (LLFM…AFVV), and 60–80 (VMYI…LALL).

Belongs to the complex I subunit 4L family. In terms of assembly, NDH-1 is composed of 13 different subunits. Subunits NuoA, H, J, K, L, M, N constitute the membrane sector of the complex.

The protein resides in the cell inner membrane. The enzyme catalyses a quinone + NADH + 5 H(+)(in) = a quinol + NAD(+) + 4 H(+)(out). NDH-1 shuttles electrons from NADH, via FMN and iron-sulfur (Fe-S) centers, to quinones in the respiratory chain. The immediate electron acceptor for the enzyme in this species is believed to be ubiquinone. Couples the redox reaction to proton translocation (for every two electrons transferred, four hydrogen ions are translocated across the cytoplasmic membrane), and thus conserves the redox energy in a proton gradient. The chain is NADH-quinone oxidoreductase subunit K from Musicola paradisiaca (strain Ech703) (Dickeya paradisiaca).